A 590-amino-acid polypeptide reads, in one-letter code: Myo-inositol transporter 3A (590 aa).

Residues 1–57 are Cytoplasmic-facing; that stretch reads MSATHIENRDDSFLENKGIDHIGRPENNNGSQEPPSPSGFGGHLIDENLVRVEGEDK. Residues 15–24 show a composition bias toward basic and acidic residues; that stretch reads ENKGIDHIGR. The tract at residues 15–40 is disordered; it reads ENKGIDHIGRPENNNGSQEPPSPSGF. A helical transmembrane segment spans residues 58–78; the sequence is VTWYLCFLISASAIAGFLFGY. At 79 to 105 the chain is on the extracellular side; the sequence is DTGVVGVALPLVGTDLGGSALNSSQQE. N-linked (GlcNAc...) asparagine glycosylation occurs at N100. The helical transmembrane segment at 106–126 threads the bilayer; it reads IITAGTTIGAIFGSAILGGWG. Residues 127–132 lie on the Cytoplasmic side of the membrane; it reads DRLGRK. The chain crosses the membrane as a helical span at residues 133 to 153; the sequence is GAILVSDVFFTIGAVIIASSY. Residues 154–157 are Extracellular-facing; sequence SVPQ. Residues 158 to 178 traverse the membrane as a helical segment; that stretch reads IIVGRIILGIGVGGAAVIAPL. Over 179–192 the chain is Cytoplasmic; sequence FITETAPTAVRGRC. A helical membrane pass occupies residues 193–213; sequence IGVNAFFIPFGQVVSDAIGAG. Topologically, residues 214-222 are extracellular; the sequence is VQNMHNGWR. A helical transmembrane segment spans residues 223 to 243; that stretch reads LLFALGAVPSLLQLLLFHYLP. Topologically, residues 244–325 are cytoplasmic; sequence ESPRILILKG…AVSALQAAGQ (82 aa). The helical transmembrane segment at 326–346 threads the bilayer; the sequence is LTGFNTLLYYAGTLFGLLGLS. Topologically, residues 347-349 are extracellular; sequence NPA. Residues 350-370 traverse the membrane as a helical segment; it reads LGGLIPAGTNAVFVLIGMSLV. Residues 371-376 lie on the Cytoplasmic side of the membrane; it reads DKVGRR. A helical membrane pass occupies residues 377–397; it reads GLLLIGVPIMLLGHVWNIVSF. Residues 398-420 lie on the Extracellular side of the membrane; the sequence is YYMCKPTGGFLDTSYSYDTTDVG. A helical transmembrane segment spans residues 421–441; the sequence is IVIGGIVFFVVGYGLTYSHLV. Residues 442–455 lie on the Cytoplasmic side of the membrane; it reads WYQAEYLTLEVRSM. The helical transmembrane segment at 456–476 threads the bilayer; that stretch reads GSGIATTVCWIANLVVSVSYL. The Extracellular segment spans residues 477 to 485; sequence SELETMTPS. Residues 486 to 506 traverse the membrane as a helical segment; that stretch reads GTYGFYFGISVIGFVFLVFCL. Over 507–590 the chain is Cytoplasmic; the sequence is PETKQLSIDE…GGKRTPSASV (84 aa).

Belongs to the major facilitator superfamily. Sugar transporter (TC 2.A.1.1) family.

The protein resides in the cell membrane. It carries out the reaction myo-inositol(out) + H(+)(out) = myo-inositol(in) + H(+)(in). Functionally, transporter for myo-inositol. The sequence is that of Myo-inositol transporter 3A (ITR3A) from Cryptococcus neoformans var. grubii serotype A (strain H99 / ATCC 208821 / CBS 10515 / FGSC 9487) (Filobasidiella neoformans var. grubii).